We begin with the raw amino-acid sequence, 229 residues long: Sodium channel modifier 1 (229 aa).

At Ser2 the chain carries Phosphoserine. The short motif at 4–20 (KREGDDWSQLNVLKKRR) is the Bipartite nuclear localization signal element. The segment at 42–74 (FACAICPHRPVLDTLAMLTAHRAGKKHLSSLKL) adopts a Matrin-type zinc-finger fold. Lys67 is covalently cross-linked (Glycyl lysine isopeptide (Lys-Gly) (interchain with G-Cter in SUMO2)). Disordered regions lie at residues 80–105 (QTGK…EAPL) and 128–187 (RRKH…TKRR). The span at 82–92 (GKGTEQNPRQQ) shows a compositional bias: polar residues. Residues 157–171 (ISKEPEPRERSDAKE) are compositionally biased toward basic and acidic residues. Residues Ser182 and Ser218 each carry the phosphoserine modification. The interval 187–229 (RVLNHYLTLRSSGWVPDGRGRWIKDENVEFDSDEEEPPDLPLD) is required for interaction with LUC7L2.

As to quaternary structure, component of the minor spliceosome. Within this complex, interacts with RNF113A, as well as with SF3B1/SF3b155, SF3B2/SF3b145, SF3B3/SF3b130 and CDC5L. May interact with LUC7L2 and SNRNP70.

Its subcellular location is the nucleus. It localises to the nucleoplasm. The protein localises to the nucleus speckle. Functionally, as a component of the minor spliceosome, involved in the splicing of U12-type introns in pre-mRNAs. Plays a role in the regulation of primary cilia length and Hedgehog signaling. This chain is Sodium channel modifier 1 (Scnm1), found in Mus musculus (Mouse).